We begin with the raw amino-acid sequence, 424 residues long: UPF0053 protein MG146 (424 aa).

Residues 6-191 (SGLTLTVIIL…EQNGLFSKED (186 aa)) enclose the CNNM transmembrane domain. Transmembrane regions (helical) follow at residues 7-27 (GLTL…STVV), 71-91 (LITI…ILFL), 101-121 (LLSS…FCEI), and 135-155 (LVLF…ITKL). 2 consecutive CBS domains span residues 210–270 (MIKW…PKSL) and 272–332 (LNQL…IYDE).

The protein belongs to the UPF0053 family.

It localises to the cell membrane. In Mycoplasma genitalium (strain ATCC 33530 / DSM 19775 / NCTC 10195 / G37) (Mycoplasmoides genitalium), this protein is UPF0053 protein MG146.